A 625-amino-acid polypeptide reads, in one-letter code: Phosphomethylpyrimidine synthase (625 aa).

Substrate contacts are provided by residues N230, M259, Y288, H324, 344–346, 385–388, and E424; these read SRG and DGLR. A Zn(2+)-binding site is contributed by H428. Residue Y451 participates in substrate binding. Residue H492 coordinates Zn(2+). 3 residues coordinate [4Fe-4S] cluster: C572, C575, and C580.

The protein belongs to the ThiC family. In terms of assembly, homodimer. The cofactor is [4Fe-4S] cluster.

It carries out the reaction 5-amino-1-(5-phospho-beta-D-ribosyl)imidazole + S-adenosyl-L-methionine = 4-amino-2-methyl-5-(phosphooxymethyl)pyrimidine + CO + 5'-deoxyadenosine + formate + L-methionine + 3 H(+). Its pathway is cofactor biosynthesis; thiamine diphosphate biosynthesis. Catalyzes the synthesis of the hydroxymethylpyrimidine phosphate (HMP-P) moiety of thiamine from aminoimidazole ribotide (AIR) in a radical S-adenosyl-L-methionine (SAM)-dependent reaction. The sequence is that of Phosphomethylpyrimidine synthase from Xanthomonas campestris pv. campestris (strain 8004).